The primary structure comprises 137 residues: Large ribosomal subunit protein uL16c (137 aa).

This sequence belongs to the universal ribosomal protein uL16 family. Part of the 50S ribosomal subunit.

The protein resides in the plastid. It localises to the chloroplast. This Bigelowiella natans (Pedinomonas minutissima) protein is Large ribosomal subunit protein uL16c.